Reading from the N-terminus, the 879-residue chain is Band 4.1-like protein 1 (879 aa).

The tract at residues 1–64 (MTTETGPDSE…RPAEQSLDME (64 aa)) is disordered. Residues 17–35 (ETPQQPEAAAAVTTPVTPA) are compositionally biased toward low complexity. The residue at position 30 (Thr-30) is a Phosphothreonine. Basic and acidic residues predominate over residues 38-50 (SHPETNSNEKHLT). Ser-75 carries the phosphoserine modification. Thr-79 bears the Phosphothreonine mark. Residues 97 to 378 (ATCRVTLLDA…EHHTFFRLVS (282 aa)) form the FERM domain. Residue Tyr-343 is modified to Phosphotyrosine. A phosphoserine mark is found at Ser-378, Ser-430, Ser-437, Ser-461, and Ser-466. The segment at 428–501 (SRSLDGAEFS…HKQEFLDKPE (74 aa)) is disordered. The segment covering 444-501 (ENHDAGPDGDKREDDAESGGRRSEAEEGEVRTPTKIKELKPEQETTPRHKQEFLDKPE) has biased composition (basic and acidic residues). Thr-475 is modified (phosphothreonine). Residues 483 to 541 (KPEQETTPRHKQEFLDKPEDVLLKHQASINELKRTLKEPNSKLIHRDRDWERERRLPSS) are spectrin--actin-binding. Ser-510 is subject to Phosphoserine. The segment covering 514–538 (LKRTLKEPNSKLIHRDRDWERERRL) has biased composition (basic and acidic residues). Disordered stretches follow at residues 514-596 (LKRT…FLKD), 633-687 (FEDF…STPE), and 718-742 (SRVS…MTTP). Phosphoserine occurs at positions 540, 541, 544, and 546. Thr-550 carries the post-translational modification Phosphothreonine. A compositionally biased stretch (basic and acidic residues) spans 550–577 (TPEKASERAGLREGSEEKVKPPRPRAPE). Ser-564 and Ser-578 each carry phosphoserine. Thr-580 carries the phosphothreonine modification. A phosphoserine mark is found at Glu-583, Gln-587, Ser-639, Ser-648, Ser-650, Ser-665, Ser-666, Asp-669, Ser-671, Ser-677, and Ser-684. Basic and acidic residues predominate over residues 635–650 (DFSRSLPELDRDKSDS). Position 685 is a phosphothreonine (Thr-685). Over residues 718–728 (SRVSTADSTQV) the composition is skewed to polar residues. Ser-721, Pro-742, Ala-766, Ser-782, and Ser-868 each carry phosphoserine. Residues 744 to 879 (CITTETISTT…EERDKKPQES (136 aa)) form a C-terminal (CTD) region.

In terms of assembly, interacts with AGAP2. In terms of tissue distribution, highest expression in brain, lower in heart and kidney. Within the brain, highest expression in cerebellum.

It is found in the cytoplasm. The protein localises to the cytoskeleton. Its function is as follows. May function to confer stability and plasticity to neuronal membrane via multiple interactions, including the spectrin-actin-based cytoskeleton, integral membrane channels and membrane-associated guanylate kinases. This is Band 4.1-like protein 1 from Rattus norvegicus (Rat).